A 563-amino-acid polypeptide reads, in one-letter code: Methylcrotonoyl-CoA carboxylase beta chain, mitochondrial (563 aa).

A mitochondrion-targeting transit peptide spans 1–22; sequence MWAVLRLALRPCARASPAGPRA. The CoA carboxyltransferase N-terminal domain maps to 49-306; it reads MKALVNQLHE…QKKLDVTIEP (258 aa). The carboxyltransferase stretch occupies residues 49-555; it reads MKALVNQLHE…SAALNAPIEK (507 aa). N6-acetyllysine; alternate is present on K70. K70 bears the N6-succinyllysine; alternate mark. K141 carries the post-translational modification N6-succinyllysine. The region spanning 309 to 555 is the CoA carboxyltransferase C-terminal domain; sequence EPLFPADELY…SAALNAPIEK (247 aa). The tract at residues 343–372 is acyl-CoA binding; sequence RFTEFKAFYGDTLVTGFARIFGYPVGIVGN. K495 bears the N6-acetyllysine; alternate mark. N6-succinyllysine; alternate is present on K495. At K511 the chain carries N6-acetyllysine.

Belongs to the AccD/PCCB family. As to quaternary structure, probably a dodecamer composed of six biotin-containing alpha subunits (MCCC1) and six beta (MCCC2) subunits.

It localises to the mitochondrion matrix. It catalyses the reaction 3-methylbut-2-enoyl-CoA + hydrogencarbonate + ATP = 3-methyl-(2E)-glutaconyl-CoA + ADP + phosphate + H(+). It functions in the pathway amino-acid degradation; L-leucine degradation; (S)-3-hydroxy-3-methylglutaryl-CoA from 3-isovaleryl-CoA: step 2/3. Carboxyltransferase subunit of the 3-methylcrotonyl-CoA carboxylase, an enzyme that catalyzes the conversion of 3-methylcrotonyl-CoA to 3-methylglutaconyl-CoA, a critical step for leucine and isovaleric acid catabolism. The protein is Methylcrotonoyl-CoA carboxylase beta chain, mitochondrial (MCCC2) of Homo sapiens (Human).